Here is a 364-residue protein sequence, read N- to C-terminus: Chorismate synthase (364 aa).

NADP(+)-binding residues include R48 and R54. Residues 130–132, 242–243, G287, 302–306, and R328 contribute to the FMN site; these read RSS, NA, and KPTSS.

This sequence belongs to the chorismate synthase family. In terms of assembly, homotetramer. It depends on FMNH2 as a cofactor.

It catalyses the reaction 5-O-(1-carboxyvinyl)-3-phosphoshikimate = chorismate + phosphate. Its pathway is metabolic intermediate biosynthesis; chorismate biosynthesis; chorismate from D-erythrose 4-phosphate and phosphoenolpyruvate: step 7/7. Catalyzes the anti-1,4-elimination of the C-3 phosphate and the C-6 proR hydrogen from 5-enolpyruvylshikimate-3-phosphate (EPSP) to yield chorismate, which is the branch point compound that serves as the starting substrate for the three terminal pathways of aromatic amino acid biosynthesis. This reaction introduces a second double bond into the aromatic ring system. The polypeptide is Chorismate synthase (Allorhizobium ampelinum (strain ATCC BAA-846 / DSM 112012 / S4) (Agrobacterium vitis (strain S4))).